Here is an 83-residue protein sequence, read N- to C-terminus: Small ribosomal subunit protein bS16 (83 aa).

This sequence belongs to the bacterial ribosomal protein bS16 family.

The protein is Small ribosomal subunit protein bS16 of Syntrophus aciditrophicus (strain SB).